We begin with the raw amino-acid sequence, 161 residues long: Phosphopantetheine adenylyltransferase (161 aa).

Thr9 provides a ligand contact to substrate. ATP is bound by residues Thr9 to Phe10 and His17. The substrate site is built by Lys41, Leu73, and Arg87. Residues Gly88–Arg90, Glu98, and Tyr123–Thr129 contribute to the ATP site.

The protein belongs to the bacterial CoaD family. As to quaternary structure, homohexamer. The cofactor is Mg(2+).

It is found in the cytoplasm. The enzyme catalyses (R)-4'-phosphopantetheine + ATP + H(+) = 3'-dephospho-CoA + diphosphate. It functions in the pathway cofactor biosynthesis; coenzyme A biosynthesis; CoA from (R)-pantothenate: step 4/5. Functionally, reversibly transfers an adenylyl group from ATP to 4'-phosphopantetheine, yielding dephospho-CoA (dPCoA) and pyrophosphate. The protein is Phosphopantetheine adenylyltransferase of Cupriavidus metallidurans (strain ATCC 43123 / DSM 2839 / NBRC 102507 / CH34) (Ralstonia metallidurans).